Consider the following 586-residue polypeptide: Arrestin-related trafficking adapter 5 (586 aa).

Disordered regions lie at residues 123–145 and 182–217; these read GENA…DMDT and ENGV…YSNR. Residues 126–145 show a composition bias toward polar residues; the sequence is AENQHNSSSGRSTSNQDMDT. A compositionally biased stretch (low complexity) spans 199 to 216; it reads SRSSSSNTLNNNSHSYSN. K364 is covalently cross-linked (Glycyl lysine isopeptide (Lys-Gly) (interchain with G-Cter in ubiquitin)).

It belongs to the arrestin family. As to quaternary structure, interacts with RSP5. In terms of processing, ubiquitinated by RSP5.

May regulate endocytosis by recruiting RSP5 ubiquitin ligase activity to specific plasma membrane proteins in response to extracellular stimuli. In Saccharomyces cerevisiae (strain ATCC 204508 / S288c) (Baker's yeast), this protein is Arrestin-related trafficking adapter 5 (ART5).